A 431-amino-acid chain; its full sequence is D-tagatose-1,6-bisphosphate aldolase subunit KbaZ (431 aa).

Belongs to the GatZ/KbaZ family. KbaZ subfamily. Forms a complex with KbaY.

The protein operates within carbohydrate metabolism; D-tagatose 6-phosphate degradation; D-glyceraldehyde 3-phosphate and glycerone phosphate from D-tagatose 6-phosphate: step 2/2. In terms of biological role, component of the tagatose-1,6-bisphosphate aldolase KbaYZ that is required for full activity and stability of the Y subunit. Could have a chaperone-like function for the proper and stable folding of KbaY. When expressed alone, KbaZ does not show any aldolase activity. This Salmonella arizonae (strain ATCC BAA-731 / CDC346-86 / RSK2980) protein is D-tagatose-1,6-bisphosphate aldolase subunit KbaZ.